Consider the following 314-residue polypeptide: Acetyl-coenzyme A carboxylase carboxyl transferase subunit beta (314 aa).

The CoA carboxyltransferase N-terminal domain occupies 37–307 (LWQKCPACDT…MSLPSIDSEA (271 aa)). C41, C44, C60, and C63 together coordinate Zn(2+). The C4-type zinc-finger motif lies at 41-63 (CPACDTLTYTKDLQQNWQVCPSC).

Belongs to the AccD/PCCB family. As to quaternary structure, acetyl-CoA carboxylase is a heterohexamer composed of biotin carboxyl carrier protein (AccB), biotin carboxylase (AccC) and two subunits each of ACCase subunit alpha (AccA) and ACCase subunit beta (AccD). Zn(2+) is required as a cofactor.

The protein localises to the cytoplasm. The enzyme catalyses N(6)-carboxybiotinyl-L-lysyl-[protein] + acetyl-CoA = N(6)-biotinyl-L-lysyl-[protein] + malonyl-CoA. Its pathway is lipid metabolism; malonyl-CoA biosynthesis; malonyl-CoA from acetyl-CoA: step 1/1. Functionally, component of the acetyl coenzyme A carboxylase (ACC) complex. Biotin carboxylase (BC) catalyzes the carboxylation of biotin on its carrier protein (BCCP) and then the CO(2) group is transferred by the transcarboxylase to acetyl-CoA to form malonyl-CoA. The protein is Acetyl-coenzyme A carboxylase carboxyl transferase subunit beta of Synechococcus sp. (strain JA-2-3B'a(2-13)) (Cyanobacteria bacterium Yellowstone B-Prime).